We begin with the raw amino-acid sequence, 384 residues long: DNA dC-&gt;dU-editing enzyme APOBEC-3G (384 aa).

Positions 1-60 (MNPQFRNMVDGMDPHKFSYNFKNRPILSRRNTVWLCYEVKTKGPSRPPLDAKIFRGQVYF) are essential for cytoplasmic localization. CMP/dCMP-type deaminase domains are found at residues 29–138 (RRNT…LRSL) and 214–328 (GRHE…LRTL). Threonine 32 carries the post-translational modification Phosphothreonine; by PKA. Zn(2+)-binding residues include histidine 65, cysteine 97, and cysteine 100. The segment at 209–336 (EPCVEGRHET…TLDEAEAKIS (128 aa)) is necessary for homooligomerization. Positions 213–215 (EGR) are interaction with DNA. Position 218 is a phosphothreonine; by PKA and CAMK2 (threonine 218). Histidine 257 is a binding site for Zn(2+). The active-site Proton donor is glutamate 259. Zn(2+) is bound by residues cysteine 288 and cysteine 291. The interval 313 to 320 (RIYDDQGR) is interaction with DNA.

This sequence belongs to the cytidine and deoxycytidylate deaminase family. In terms of assembly, homodimer. Requires Zn(2+) as cofactor.

The protein localises to the cytoplasm. The protein resides in the nucleus. It localises to the P-body. It carries out the reaction a 2'-deoxycytidine in single-stranded DNA + H2O + H(+) = a 2'-deoxyuridine in single-stranded DNA + NH4(+). DNA deaminase (cytidine deaminase) which acts as an inhibitor of retrovirus replication and retrotransposon mobility. After the penetration of retroviral nucleocapsids into target cells of infection and the initiation of reverse transcription, it can induce the conversion of cytosine to uracil in the minus-sense single-strand viral DNA, leading to G-to-A hypermutations in the subsequent plus-strand viral DNA. The resultant detrimental levels of mutations in the proviral genome, along with a deamination-independent mechanism that works prior to the proviral integration, together exert efficient antiretroviral effects in infected target cells. Selectively targets single-stranded DNA and does not deaminate double-stranded DNA or single- or double-stranded RNA. This chain is DNA dC-&gt;dU-editing enzyme APOBEC-3G (APOBEC3G), found in Pongo pygmaeus (Bornean orangutan).